An 85-amino-acid chain; its full sequence is Large ribosomal subunit protein bL27 (85 aa).

A disordered region spans residues 1–25; it reads MAHKKGVGSSRNGRDSNPKMLGVKR.

Belongs to the bacterial ribosomal protein bL27 family.

This is Large ribosomal subunit protein bL27 from Roseiflexus castenholzii (strain DSM 13941 / HLO8).